We begin with the raw amino-acid sequence, 444 residues long: Enolase 1 (444 aa).

Substrate is bound by residues His165 and Glu174. The Proton donor role is filled by Glu217. Residues Glu303 and Asp330 each contribute to the substrate site. The active-site Proton acceptor is the Lys355. Residues 382–385 (SHRS) and Lys406 contribute to the substrate site.

This sequence belongs to the enolase family. In terms of assembly, homodimer. Mg(2+) serves as cofactor.

It localises to the cytoplasm. It catalyses the reaction (2R)-2-phosphoglycerate = phosphoenolpyruvate + H2O. Its pathway is carbohydrate degradation; glycolysis; pyruvate from D-glyceraldehyde 3-phosphate: step 4/5. The sequence is that of Enolase 1 (ENO1) from Toxoplasma gondii.